We begin with the raw amino-acid sequence, 707 residues long: Elongation factor G (707 aa).

The 285-residue stretch at 9 to 293 folds into the tr-type G domain; that stretch reads HDVRNIGIMA…GVVDYLPSPE (285 aa). Residues 18–25, 90–94, and 144–147 each bind GTP; these read AHIDAGKT, DTPGH, and NKMD.

The protein belongs to the TRAFAC class translation factor GTPase superfamily. Classic translation factor GTPase family. EF-G/EF-2 subfamily.

The protein localises to the cytoplasm. In terms of biological role, catalyzes the GTP-dependent ribosomal translocation step during translation elongation. During this step, the ribosome changes from the pre-translocational (PRE) to the post-translocational (POST) state as the newly formed A-site-bound peptidyl-tRNA and P-site-bound deacylated tRNA move to the P and E sites, respectively. Catalyzes the coordinated movement of the two tRNA molecules, the mRNA and conformational changes in the ribosome. This Bifidobacterium longum (strain DJO10A) protein is Elongation factor G.